The chain runs to 184 residues: Cytidylate kinase (184 aa).

8 to 16 (GQPGSGKTT) is a binding site for ATP.

This sequence belongs to the cytidylate kinase family. Type 2 subfamily.

It is found in the cytoplasm. It carries out the reaction CMP + ATP = CDP + ADP. It catalyses the reaction dCMP + ATP = dCDP + ADP. This chain is Cytidylate kinase, found in Pyrobaculum aerophilum (strain ATCC 51768 / DSM 7523 / JCM 9630 / CIP 104966 / NBRC 100827 / IM2).